The primary structure comprises 213 residues: Protein DMP3 (213 aa).

Residues 1–27 (MSSPSSLTQRNPTSSQEQSESVPQLRR) form a disordered region. A run of 4 helical transmembrane segments spans residues 45 to 65 (LANL…PVFT), 74 to 94 (TQVL…LSSF), 136 to 156 (IRII…AVAL), and 176 to 196 (VLDI…LVFP).

This sequence belongs to the plant DMP1 protein family. In terms of tissue distribution, expressed in leaves, siliques and roots (e.g. root hairs).

It is found in the endoplasmic reticulum membrane. Its function is as follows. Involved in membrane remodeling. This is Protein DMP3 from Arabidopsis thaliana (Mouse-ear cress).